A 75-amino-acid polypeptide reads, in one-letter code: UPF0352 protein KPN78578_25810 (75 aa).

It belongs to the UPF0352 family.

This is UPF0352 protein KPN78578_25810 from Klebsiella pneumoniae subsp. pneumoniae (strain ATCC 700721 / MGH 78578).